A 1023-amino-acid chain; its full sequence is RTX-I toxin determinant A from serotypes 1/9 (1023 aa).

3 consecutive transmembrane segments (helical) span residues 226–256 (NNLPDLSLAGPGFDAVSGILSVVSASFILSN), 297–326 (STTAATGGLIGSVVALAISPLSFLNVADKF), and 367–406 (INSVLSARSAGVGAAATGSLVGAPVAALVSAITGIISGIL). Hemolysin-type calcium-binding repeat units lie at residues 730-747 (FGSRFTDIFHGAKGDDEI), 748-765 (YGNDGHDILYGDDGNDVI), 766-783 (HGGDGNDHLVGGNGNDRL), 784-801 (IGGKGNNFLNGGDGDDEL), 812-829 (LGGAGNDILYGSDGTNLF), and 830-847 (DGGVGNDKIYGGLGKDIY).

It belongs to the RTX prokaryotic toxin (TC 1.C.11) family. Post-translationally, palmitoylated by ApxIC. The toxin only becomes active when modified.

The protein resides in the secreted. It localises to the host cell membrane. In terms of biological role, one of the virulence factors of A.pleuropneumoniae, which has a strong hemolytic activity and is cytotoxic for alveolar macrophages and neutrophils. The protein is RTX-I toxin determinant A from serotypes 1/9 (apxIA) of Actinobacillus pleuropneumoniae (Haemophilus pleuropneumoniae).